A 364-amino-acid polypeptide reads, in one-letter code: Protein FAM81A (364 aa).

Residues 80–107 (IRNITAIVKQLNRDIEVLQEQIRARDNI) adopt a coiled-coil conformation. Positions 275–300 (ARLDKIEESQRRNAEGQRKPEEEKVH) are enriched in basic and acidic residues. The disordered stretch occupies residues 275–301 (ARLDKIEESQRRNAEGQRKPEEEKVHG).

This sequence belongs to the FAM81 family. In terms of assembly, interacts with DLG4/PSD-95, GRIN2B/GLUN2B and SYNGAP1; the interactions facilitate condensate formation. As to expression, highly expressed in brain (at protein level).

Its subcellular location is the postsynaptic density. The protein localises to the cytoplasm. Facilitates the interaction and assembly of proteins within the postsynaptic density by promoting the condensation of postsynaptic proteins via liquid-liquid phase separation. Required for neuronal activity. Accumulation at the postsynaptic density results in enlargement of dendritic spines. In Rattus norvegicus (Rat), this protein is Protein FAM81A.